Reading from the N-terminus, the 908-residue chain is Protein translocase subunit SecA (908 aa).

ATP is bound by residues Gln-87, 105 to 109, and Asp-511; that span reads GEGKT. Positions 559-570 are enriched in basic and acidic residues; it reads ERHESRRIDNQL. Disordered stretches follow at residues 559–582 and 841–908; these read ERHE…DPGS and RRRR…GRLE. Residues 847-856 are compositionally biased toward low complexity; the sequence is LAQQMQRAQA. Positions 862 to 873 are enriched in acidic residues; the sequence is TEEDSDAEEQAE. Residues Cys-892, Cys-894, Cys-903, and His-904 each coordinate Zn(2+). Over residues 898–908 the composition is skewed to basic residues; it reads KKYKQCHGRLE.

Belongs to the SecA family. As to quaternary structure, monomer and homodimer. Part of the essential Sec protein translocation apparatus which comprises SecA, SecYEG and auxiliary proteins SecDF-YajC and YidC. Zn(2+) serves as cofactor.

The protein resides in the cell inner membrane. The protein localises to the cytoplasm. It catalyses the reaction ATP + H2O + cellular proteinSide 1 = ADP + phosphate + cellular proteinSide 2.. Functionally, part of the Sec protein translocase complex. Interacts with the SecYEG preprotein conducting channel. Has a central role in coupling the hydrolysis of ATP to the transfer of proteins into and across the cell membrane, serving both as a receptor for the preprotein-SecB complex and as an ATP-driven molecular motor driving the stepwise translocation of polypeptide chains across the membrane. The protein is Protein translocase subunit SecA of Hahella chejuensis (strain KCTC 2396).